The following is a 336-amino-acid chain: Biotin synthase (336 aa).

The 228-residue stretch at 54–281 folds into the Radical SAM core domain; sequence NAIQLSTLLS…KAMVRLSAGR (228 aa). C69, C73, and C76 together coordinate [4Fe-4S] cluster. Residues C113, C144, C204, and R276 each coordinate [2Fe-2S] cluster.

This sequence belongs to the radical SAM superfamily. Biotin synthase family. Homodimer. Requires [4Fe-4S] cluster as cofactor. [2Fe-2S] cluster serves as cofactor.

The catalysed reaction is (4R,5S)-dethiobiotin + (sulfur carrier)-SH + 2 reduced [2Fe-2S]-[ferredoxin] + 2 S-adenosyl-L-methionine = (sulfur carrier)-H + biotin + 2 5'-deoxyadenosine + 2 L-methionine + 2 oxidized [2Fe-2S]-[ferredoxin]. Its pathway is cofactor biosynthesis; biotin biosynthesis; biotin from 7,8-diaminononanoate: step 2/2. In terms of biological role, catalyzes the conversion of dethiobiotin (DTB) to biotin by the insertion of a sulfur atom into dethiobiotin via a radical-based mechanism. The sequence is that of Biotin synthase from Burkholderia pseudomallei (strain 1710b).